Here is a 160-residue protein sequence, read N- to C-terminus: Phosphopantetheine adenylyltransferase (160 aa).

Threonine 10 is a substrate binding site. ATP contacts are provided by residues 10 to 11 (TF) and histidine 18. Substrate-binding residues include lysine 42, leucine 74, and arginine 88. ATP is bound by residues 89–91 (GLR), glutamate 99, and 124–130 (HGFLSST).

The protein belongs to the bacterial CoaD family. In terms of assembly, homohexamer. Requires Mg(2+) as cofactor.

Its subcellular location is the cytoplasm. It carries out the reaction (R)-4'-phosphopantetheine + ATP + H(+) = 3'-dephospho-CoA + diphosphate. It participates in cofactor biosynthesis; coenzyme A biosynthesis; CoA from (R)-pantothenate: step 4/5. Reversibly transfers an adenylyl group from ATP to 4'-phosphopantetheine, yielding dephospho-CoA (dPCoA) and pyrophosphate. The sequence is that of Phosphopantetheine adenylyltransferase from Aliivibrio fischeri (strain MJ11) (Vibrio fischeri).